An 812-amino-acid polypeptide reads, in one-letter code: MSRFFSSNYEYDVASSSSEEDLLSSSEEDLLSSSSSESELDQESDDSFFNESESESEADVDSDDSDAKPYGPDWFKKSEFRKQGGGSNKFLKSSNYDSSDEESDEEDGKKVVKSAKEKLLDEMQDVYNKISQAENSDDWLTISNEFDLISRLLVRAQQQNWGTPNIFIKVVAQVEDAVNNTQQADLKNKAVARAYNTTKQRVKKVSRENEDSMAKFRNDPESFDKEPTADLDISANGFTISSSQGNDQAVQEDFFTRLQTIIDSRGKKTVNQQSLISTLEELLTVAEKPYEFIMAYLTLIPSRFDASANLSYQPIDQWKSSFNDISKLLSILDQTIDTYQVNEFADPIDFIEDEPKEDSDGVKRILGSIFSFVERLDDEFMKSLLNIDPHSSDYLIRLRDEQSIYNLILRTQLYFEATLKDEHDLERALTRPFVKRLDHIYYKSENLIKIMETAAWNIIPAQFKSKFTSKDQLDSADYVDNLIDGLSTILSKQNNIAVQKRAILYNIYYTALNKDFQTAKDMLLTSQVQTNINQFDSSLQILFNRVVVQLGLSAFKLCLIEECHQILNDLLSSSHLREILGQQSLHRISLNSSNNASADERARQCLPYHQHINLDLIDVVFLTCSLLIEIPRMTAFYSGIKVKRIPYSPKSIRRSLEHYDKLSFQGPPETLRDYVLFAAKSMQKGNWRDSVKYLREIKSWALLPNMETVLNSLTERVQVESLKTYFFSFKRFYSSFSVAKLAELFDLPENKVVEVLQSVIAELEIPAKLNDEKTIFVVEKGDEITKLEEAMVKLNKEYKIAKERLNPPSNRR.

Positions 1–110 (MSRFFSSNYE…EESDEEDGKK (110 aa)) are disordered. 2 stretches are compositionally biased toward acidic residues: residues 18–30 (SEED…EEDL) and 38–64 (SELD…DSDD). 3 positions are modified to phosphoserine: Ser-98, Ser-99, and Ser-103. The region spanning 608–783 (YHQHINLDLI…TIFVVEKGDE (176 aa)) is the PCI domain.

It belongs to the eIF-3 subunit C family. In terms of assembly, the eukaryotic translation initiation factor 3 (eIF-3) core complex is composed of TIF32, PRT1, NIP1, TIF34 and TIF35. A subcomplex of TIF32, NIP1 and PRT1 mediates the interaction with eIF-1, TIF5/eIF-5 and HCR1. The factors eIF-1, eIF-2, eIF-3, TIF5/eIF-5 and methionyl-tRNAi form a multifactor complex (MFC) that may bind to the 40S ribosome. TIF32, NIP1 and TIF5/eIF-5 comprise a minimal 40S-ribosome-binding unit. NIP1 interacts with TIF5/eIF-5 and SUI1.

It localises to the cytoplasm. Its function is as follows. Component of the eukaryotic translation initiation factor 3 (eIF-3) complex, which is involved in protein synthesis of a specialized repertoire of mRNAs and, together with other initiation factors, stimulates binding of mRNA and methionyl-tRNAi to the 40S ribosome. The eIF-3 complex specifically targets and initiates translation of a subset of mRNAs involved in cell proliferation. The polypeptide is Eukaryotic translation initiation factor 3 subunit C (Saccharomyces cerevisiae (strain ATCC 204508 / S288c) (Baker's yeast)).